We begin with the raw amino-acid sequence, 140 residues long: MLPAAMKGLGLVLLAALLCSSPAHGLWCQDCTLTTNSSHCTPKQCHPSDTVCATVWITDPSSSRKDHSVNKMCASSCDFVKRHFFSDYLMGFINSGILKVDVDCCEKDLCNGVAQAGLSPWALAGGLLLSLGPALLWAGP.

Residues 1 to 25 (MLPAAMKGLGLVLLAALLCSSPAHG) form the signal peptide. The UPAR/Ly6 domain occupies 26-91 (LWCQDCTLTT…RHFFSDYLMG (66 aa)). Cystine bridges form between C28-C52, C31-C40, C45-C73, C77-C104, and C105-C110. A glycan (N-linked (GlcNAc...) asparagine) is linked at N36.

Its subcellular location is the cell membrane. The protein is Lymphocyte antigen 6H (LY6H) of Bos taurus (Bovine).